The sequence spans 723 residues: Polyribonucleotide nucleotidyltransferase (723 aa).

Residues Asp-488 and Asp-494 each coordinate Mg(2+). Positions 555 to 614 (PKIITLNIKPEKIKDVIGPGGKQINAIIDETGVKIDIEQDGTVYIASQDQAMNRKAIAII) constitute a KH domain. In terms of domain architecture, S1 motif spans 624–692 (GEVYTGKVRR…QQGRVNLSRK (69 aa)). Residues 692–723 (KALLEKKEQPEGDKKPQAEKKFYPKTKKPESK) form a disordered region. Positions 693-723 (ALLEKKEQPEGDKKPQAEKKFYPKTKKPESK) are enriched in basic and acidic residues.

The protein belongs to the polyribonucleotide nucleotidyltransferase family. Requires Mg(2+) as cofactor.

It localises to the cytoplasm. It carries out the reaction RNA(n+1) + phosphate = RNA(n) + a ribonucleoside 5'-diphosphate. Involved in mRNA degradation. Catalyzes the phosphorolysis of single-stranded polyribonucleotides processively in the 3'- to 5'-direction. The protein is Polyribonucleotide nucleotidyltransferase of Listeria monocytogenes serotype 4a (strain HCC23).